Here is a 477-residue protein sequence, read N- to C-terminus: Aspartyl/glutamyl-tRNA(Asn/Gln) amidotransferase subunit B (477 aa).

It belongs to the GatB/GatE family. GatB subfamily. Heterotrimer of A, B and C subunits.

The catalysed reaction is L-glutamyl-tRNA(Gln) + L-glutamine + ATP + H2O = L-glutaminyl-tRNA(Gln) + L-glutamate + ADP + phosphate + H(+). It catalyses the reaction L-aspartyl-tRNA(Asn) + L-glutamine + ATP + H2O = L-asparaginyl-tRNA(Asn) + L-glutamate + ADP + phosphate + 2 H(+). In terms of biological role, allows the formation of correctly charged Asn-tRNA(Asn) or Gln-tRNA(Gln) through the transamidation of misacylated Asp-tRNA(Asn) or Glu-tRNA(Gln) in organisms which lack either or both of asparaginyl-tRNA or glutaminyl-tRNA synthetases. The reaction takes place in the presence of glutamine and ATP through an activated phospho-Asp-tRNA(Asn) or phospho-Glu-tRNA(Gln). The polypeptide is Aspartyl/glutamyl-tRNA(Asn/Gln) amidotransferase subunit B (Nitrosococcus oceani (strain ATCC 19707 / BCRC 17464 / JCM 30415 / NCIMB 11848 / C-107)).